The chain runs to 340 residues: Glycerol-3-phosphate dehydrogenase [NAD(P)+] (340 aa).

NADPH is bound by residues Ser-12, Trp-13, and Lys-110. The sn-glycerol 3-phosphate site is built by Lys-110, Gly-141, and Ser-143. Ala-145 is a binding site for NADPH. 5 residues coordinate sn-glycerol 3-phosphate: Lys-196, Asp-249, Ser-259, Arg-260, and Asn-261. Lys-196 serves as the catalytic Proton acceptor. NADPH is bound at residue Arg-260. The NADPH site is built by Val-284 and Glu-286.

The protein belongs to the NAD-dependent glycerol-3-phosphate dehydrogenase family.

It is found in the cytoplasm. It carries out the reaction sn-glycerol 3-phosphate + NAD(+) = dihydroxyacetone phosphate + NADH + H(+). The catalysed reaction is sn-glycerol 3-phosphate + NADP(+) = dihydroxyacetone phosphate + NADPH + H(+). Its pathway is membrane lipid metabolism; glycerophospholipid metabolism. Catalyzes the reduction of the glycolytic intermediate dihydroxyacetone phosphate (DHAP) to sn-glycerol 3-phosphate (G3P), the key precursor for phospholipid synthesis. This is Glycerol-3-phosphate dehydrogenase [NAD(P)+] from Latilactobacillus sakei subsp. sakei (strain 23K) (Lactobacillus sakei subsp. sakei).